The primary structure comprises 230 residues: Cytochrome c oxidase subunit 2 (230 aa).

Residues 1–14 lie on the Mitochondrial intermembrane side of the membrane; the sequence is MAHPSQLGFQDAAS. Residues 15–45 form a helical membrane-spanning segment; that stretch reads PVMEELIHFHDHTLMIVFLISTLVLYIITAM. Over 46-59 the chain is Mitochondrial matrix; sequence VSTKLTNKYILDSQ. Residues 60 to 87 form a helical membrane-spanning segment; sequence EIEIVWTILPAIILIMIALPSLRILYLM. The Mitochondrial intermembrane portion of the chain corresponds to 88–230; sequence DEINDPHLTI…TWSSLMLEEA (143 aa). Residues histidine 161, cysteine 196, glutamate 198, cysteine 200, histidine 204, and methionine 207 each contribute to the Cu cation site. Glutamate 198 serves as a coordination point for Mg(2+).

Belongs to the cytochrome c oxidase subunit 2 family. Component of the cytochrome c oxidase (complex IV, CIV), a multisubunit enzyme composed of 14 subunits. The complex is composed of a catalytic core of 3 subunits MT-CO1, MT-CO2 and MT-CO3, encoded in the mitochondrial DNA, and 11 supernumerary subunits COX4I, COX5A, COX5B, COX6A, COX6B, COX6C, COX7A, COX7B, COX7C, COX8 and NDUFA4, which are encoded in the nuclear genome. The complex exists as a monomer or a dimer and forms supercomplexes (SCs) in the inner mitochondrial membrane with NADH-ubiquinone oxidoreductase (complex I, CI) and ubiquinol-cytochrome c oxidoreductase (cytochrome b-c1 complex, complex III, CIII), resulting in different assemblies (supercomplex SCI(1)III(2)IV(1) and megacomplex MCI(2)III(2)IV(2)). Found in a complex with TMEM177, COA6, COX18, COX20, SCO1 and SCO2. Interacts with TMEM177 in a COX20-dependent manner. Interacts with COX20. Interacts with COX16. The cofactor is Cu cation.

Its subcellular location is the mitochondrion inner membrane. It catalyses the reaction 4 Fe(II)-[cytochrome c] + O2 + 8 H(+)(in) = 4 Fe(III)-[cytochrome c] + 2 H2O + 4 H(+)(out). Functionally, component of the cytochrome c oxidase, the last enzyme in the mitochondrial electron transport chain which drives oxidative phosphorylation. The respiratory chain contains 3 multisubunit complexes succinate dehydrogenase (complex II, CII), ubiquinol-cytochrome c oxidoreductase (cytochrome b-c1 complex, complex III, CIII) and cytochrome c oxidase (complex IV, CIV), that cooperate to transfer electrons derived from NADH and succinate to molecular oxygen, creating an electrochemical gradient over the inner membrane that drives transmembrane transport and the ATP synthase. Cytochrome c oxidase is the component of the respiratory chain that catalyzes the reduction of oxygen to water. Electrons originating from reduced cytochrome c in the intermembrane space (IMS) are transferred via the dinuclear copper A center (CU(A)) of subunit 2 and heme A of subunit 1 to the active site in subunit 1, a binuclear center (BNC) formed by heme A3 and copper B (CU(B)). The BNC reduces molecular oxygen to 2 water molecules using 4 electrons from cytochrome c in the IMS and 4 protons from the mitochondrial matrix. This chain is Cytochrome c oxidase subunit 2 (MT-CO2), found in Scyliorhinus canicula (Small-spotted catshark).